The primary structure comprises 463 residues: L-seryl-tRNA(Sec) selenium transferase (463 aa).

Lys-295 carries the N6-(pyridoxal phosphate)lysine modification.

Belongs to the SelA family. As to quaternary structure, homodecamer; pentamer of dimers. Binds only one seryl-tRNA(Sec) per dimer. The cofactor is pyridoxal 5'-phosphate.

It localises to the cytoplasm. The enzyme catalyses L-seryl-tRNA(Sec) + selenophosphate + H(+) = L-selenocysteinyl-tRNA(Sec) + phosphate. The protein operates within aminoacyl-tRNA biosynthesis; selenocysteinyl-tRNA(Sec) biosynthesis; selenocysteinyl-tRNA(Sec) from L-seryl-tRNA(Sec) (bacterial route): step 1/1. Converts seryl-tRNA(Sec) to selenocysteinyl-tRNA(Sec) required for selenoprotein biosynthesis. This is L-seryl-tRNA(Sec) selenium transferase from Shigella sonnei (strain Ss046).